A 361-amino-acid chain; its full sequence is Mannose-1-phosphate guanyltransferase (361 aa).

It belongs to the transferase hexapeptide repeat family.

The protein localises to the cytoplasm. It carries out the reaction alpha-D-mannose 1-phosphate + GTP + H(+) = GDP-alpha-D-mannose + diphosphate. Its pathway is nucleotide-sugar biosynthesis; GDP-alpha-D-mannose biosynthesis; GDP-alpha-D-mannose from alpha-D-mannose 1-phosphate (GTP route): step 1/1. Functionally, involved in cell wall synthesis where it is required for glycosylation. Involved in cell cycle progression through cell-size checkpoint. This Kluyveromyces lactis (strain ATCC 8585 / CBS 2359 / DSM 70799 / NBRC 1267 / NRRL Y-1140 / WM37) (Yeast) protein is Mannose-1-phosphate guanyltransferase (MPG1).